A 165-amino-acid polypeptide reads, in one-letter code: UPF0114 protein Ent638_3411 (165 aa).

Helical transmembrane passes span 15 to 35 (LLAP…IKFF), 53 to 73 (LILV…LVMV), and 136 to 156 (LMWY…MGYL).

It belongs to the UPF0114 family.

Its subcellular location is the cell membrane. The chain is UPF0114 protein Ent638_3411 from Enterobacter sp. (strain 638).